A 286-amino-acid chain; its full sequence is Aquaporin PIP2-4 (286 aa).

A run of 2 helical transmembrane segments spans residues 40–60 (ALIA…ATVI) and 77–97 (CGGV…FILV). Positions 109 to 111 (NPA) match the NPA 1 motif. Transmembrane regions (helical) follow at residues 128–148 (LLYM…VKGF), 170–190 (GTGL…VFSA), and 204–224 (VLAP…TIPI). An NPA 2 motif is present at residues 230-232 (NPA). Residues 252–272 (IFWVGPFIGAAIAALYHQVIL) form a helical membrane-spanning segment.

Belongs to the MIP/aquaporin (TC 1.A.8) family. PIP (TC 1.A.8.11) subfamily. Expressed in roots.

The protein localises to the cell membrane. Functionally, water channel required to facilitate the transport of water across cell membrane. May play a role in root water uptake. The chain is Aquaporin PIP2-4 (PIP2-4) from Oryza sativa subsp. japonica (Rice).